The sequence spans 96 residues: Co-chaperonin GroES (96 aa).

It belongs to the GroES chaperonin family. In terms of assembly, heptamer of 7 subunits arranged in a ring. Interacts with the chaperonin GroEL.

The protein localises to the cytoplasm. Together with the chaperonin GroEL, plays an essential role in assisting protein folding. The GroEL-GroES system forms a nano-cage that allows encapsulation of the non-native substrate proteins and provides a physical environment optimized to promote and accelerate protein folding. GroES binds to the apical surface of the GroEL ring, thereby capping the opening of the GroEL channel. This chain is Co-chaperonin GroES, found in Vibrio campbellii (strain ATCC BAA-1116).